Consider the following 480-residue polypeptide: 3,6-anhydro-alpha-L-galactose dehydrogenase (480 aa).

Residues 149-150 (WN), 173-176 (KPTS), and 226-227 (GS) each bind NADP(+). The active-site Proton acceptor is the Glu248. An NADP(+)-binding site is contributed by Leu249. Residue Cys282 is the Nucleophile of the active site. Glu383 serves as a coordination point for NADP(+).

It belongs to the aldehyde dehydrogenase family.

It carries out the reaction 3,6-anhydro-alpha-L-galactopyranose + NADP(+) + H2O = 3,6-anhydro-L-galactonate + NADPH + 2 H(+). The enzyme catalyses 3,6-anhydro-alpha-L-galactopyranose + NAD(+) + H2O = 3,6-anhydro-L-galactonate + NADH + 2 H(+). Functionally, involved in the degradation of 3,6-anhydro-L-galactose, which is the major monomeric sugar of red macroalgae. Catalyzes the oxidation of 3,6-anhydro-L-galactose (AHG) to form 3,6-anhydrogalactonate (AHGA). The chain is 3,6-anhydro-alpha-L-galactose dehydrogenase from Vibrio sp. (strain EJY3).